A 981-amino-acid chain; its full sequence is Ubiquitin carboxyl-terminal hydrolase 15 (981 aa).

Ala2 carries the N-acetylalanine modification. The mediates interaction with SART3 stretch occupies residues 2–223 (AEGGAADLDT…KNEDGTWPRG (222 aa)). In terms of domain architecture, DUSP spans 7–118 (ADLDTQRSDI…GQEPIARKVV (112 aa)). The disordered stretch occupies residues 216–237 (EDGTWPRGPSTPKSPGASNFST). Thr226 carries the phosphothreonine modification. Residues 226–237 (TPKSPGASNFST) are compositionally biased toward polar residues. A phosphoserine mark is found at Ser229 and Ser242. One can recognise a USP domain in the interval 289 to 933 (CGLSNLGNTC…AAYVLFYQRQ (645 aa)). Cys298 acts as the Nucleophile in catalysis. Thr602 carries the post-translational modification Phosphothreonine. Residues 633–694 (CCEDQNINGN…GGDNDSENGL (62 aa)) form a disordered region. A compositionally biased stretch (acidic residues) spans 656-673 (METDEPDDESSQDQELPS). His891 acts as the Proton acceptor in catalysis. The segment at 952–981 (SAATGIPLESDEDSNDNDNDLENENCMHTN) is disordered. Residues 960 to 974 (ESDEDSNDNDNDLEN) show a composition bias toward acidic residues. 2 positions are modified to phosphoserine: Ser961 and Ser965.

The protein belongs to the peptidase C19 family. As to quaternary structure, a homodimer structure has been reported; however it is unclear whether the protein form a homodimer in vivo. Identified in a complex with the COP9 signalosome complex (CSN). Interacts with SMAD1, SMAD2 and SMAD3; the interaction is direct. Forms a complex with SMURF2 and SMAD7. Interacts with TGFBR1. Interacts with SART3; the interaction is direct. May interact with RNF20 and RNF40. May interact with PRKN. Interacts with INCA1. Phosphorylated. Phosphorylation protects against ubiquitination and subsequent degradation by the proteasome. Post-translationally, ubiquitinated, leading to degradation by the proteasome. Widely expressed with highest levels in the brain and spleen, and lowest levels in the muscles (at protein level). In the midbrain, strong expression in neurons including the dopaminergic neurons (at protein level). Widely expressed with highest levels in testis, heart and liver.

It localises to the cytoplasm. Its subcellular location is the nucleus. The protein resides in the mitochondrion. The enzyme catalyses Thiol-dependent hydrolysis of ester, thioester, amide, peptide and isopeptide bonds formed by the C-terminal Gly of ubiquitin (a 76-residue protein attached to proteins as an intracellular targeting signal).. In terms of biological role, hydrolase that removes conjugated ubiquitin from target proteins and regulates various pathways such as the TGF-beta receptor signaling, NF-kappa-B and RNF41/NRDP1-PRKN pathways. Acts as a key regulator of TGF-beta receptor signaling pathway, but the precise mechanism is still unclear: according to a report, acts by promoting deubiquitination of monoubiquitinated R-SMADs (SMAD1, SMAD2 and/or SMAD3), thereby alleviating inhibition of R-SMADs and promoting activation of TGF-beta target genes. According to another reports, regulates the TGF-beta receptor signaling pathway by mediating deubiquitination and stabilization of TGFBR1, leading to an enhanced TGF-beta signal. Able to mediate deubiquitination of monoubiquitinated substrates, 'Lys-27'-, 'Lys-48'- and 'Lys-63'-linked polyubiquitin chains. May also regulate gene expression and/or DNA repair through the deubiquitination of histone H2B. Acts as an inhibitor of mitophagy by counteracting the action of parkin (PRKN): hydrolyzes cleavage of 'Lys-48'- and 'Lys-63'-linked polyubiquitin chains attached by parkin on target proteins such as MFN2, thereby reducing parkin's ability to drive mitophagy. Acts as an associated component of COP9 signalosome complex (CSN) and regulates different pathways via this association: regulates NF-kappa-B by mediating deubiquitination of NFKBIA and deubiquitinates substrates bound to VCP. Involved in endosome organization by mediating deubiquitination of SQSTM1: ubiquitinated SQSTM1 forms a molecular bridge that restrains cognate vesicles in the perinuclear region and its deubiquitination releases target vesicles for fast transport into the cell periphery. Acts as a negative regulator of antifungal immunity by mediating 'Lys-27'-linked deubiquitination of CARD9, thereby inactivating CARD9. This chain is Ubiquitin carboxyl-terminal hydrolase 15 (Usp15), found in Mus musculus (Mouse).